We begin with the raw amino-acid sequence, 215 residues long: Ribonuclease (215 aa).

Residues 1–22 (MKKIVVLLGMLLAPWFSSAVQA) form the signal peptide. Residues H62, E102, and H106 contribute to the active site. The tract at residues 144 to 166 (KPLPAQGGSGQCQRLAGPGQHHG) is disordered.

This sequence belongs to the RNase T2 family.

Its subcellular location is the periplasm. It localises to the cytoplasm. In terms of biological role, one of the few RNases that cleave the phosphodiester bond between any two nucleotide. Shows a preference for adenylic acid. This chain is Ribonuclease, found in Aeromonas hydrophila.